The chain runs to 85 residues: Large ribosomal subunit protein bL27 (85 aa).

The tract at residues 1 to 21 (MAHKKAGGSTRNGRDSESKRL) is disordered.

It belongs to the bacterial ribosomal protein bL27 family.

The polypeptide is Large ribosomal subunit protein bL27 (Pseudomonas putida (strain W619)).